The sequence spans 72 residues: Translation initiation factor IF-1 (72 aa).

Residues 1 to 72 form the S1-like domain; sequence MSKEDVIEMQ…TRGRITWRAK (72 aa).

Belongs to the IF-1 family. Component of the 30S ribosomal translation pre-initiation complex which assembles on the 30S ribosome in the order IF-2 and IF-3, IF-1 and N-formylmethionyl-tRNA(fMet); mRNA recruitment can occur at any time during PIC assembly.

The protein resides in the cytoplasm. Functionally, one of the essential components for the initiation of protein synthesis. Stabilizes the binding of IF-2 and IF-3 on the 30S subunit to which N-formylmethionyl-tRNA(fMet) subsequently binds. Helps modulate mRNA selection, yielding the 30S pre-initiation complex (PIC). Upon addition of the 50S ribosomal subunit IF-1, IF-2 and IF-3 are released leaving the mature 70S translation initiation complex. The protein is Translation initiation factor IF-1 of Clostridium acetobutylicum (strain ATCC 824 / DSM 792 / JCM 1419 / IAM 19013 / LMG 5710 / NBRC 13948 / NRRL B-527 / VKM B-1787 / 2291 / W).